We begin with the raw amino-acid sequence, 169 residues long: Thaumatin-like pathogenesis-related protein 4 (169 aa).

The signal sequence occupies residues 1–21; that stretch reads MATSSTVLFLLLAVFAASASA.

Belongs to the thaumatin family.

Its function is as follows. Associated with resistance against stem rust fungi. This Avena sativa (Oat) protein is Thaumatin-like pathogenesis-related protein 4 (RASTL-4).